Reading from the N-terminus, the 498-residue chain is Probable FAD-binding monooxygenase AlmA (498 aa).

Residues 4–24 (HIDILIVGAGISGIGIAAHLS) form a helical membrane-spanning segment. FAD is bound by residues serine 15, glutamate 36, aspartate 56, phenylalanine 62, and valine 104. Position 54 to 56 (54 to 56 (RSD)) interacts with NADP(+). NADP(+) is bound by residues 184 to 190 (SGATAIT), 208 to 209 (RS), and 292 to 293 (RL). Valine 395 contacts FAD.

Belongs to the FAD-binding monooxygenase family. The cofactor is FAD.

It is found in the cell membrane. It participates in hydrocarbon metabolism; alkane degradation. In terms of biological role, is able to catalyze the degradation of n-alkanes with C chain lengths of 32 and 36. Probably allows Acinetobacter baylyi strain ADP1 to grow on the long-chain n-alkane dotriacontane (C32H66) as a sole carbon source. The chain is Probable FAD-binding monooxygenase AlmA from Acinetobacter baylyi (strain ATCC 33305 / BD413 / ADP1).